The sequence spans 439 residues: Enolase 1 (439 aa).

Substrate contacts are provided by His-160 and Glu-169. The active-site Proton donor is the Glu-212. Mg(2+)-binding residues include Asp-247, Glu-296, and Asp-323. Substrate is bound by residues Glu-296 and Asp-323. The Proton acceptor role is filled by Lys-348. Substrate-binding positions include 375-378 and Lys-399; that span reads SHRS.

It belongs to the enolase family. Homodimer. Mg(2+) is required as a cofactor.

The protein localises to the cytoplasm. The enzyme catalyses (2R)-2-phosphoglycerate = phosphoenolpyruvate + H2O. It participates in carbohydrate degradation; glycolysis; pyruvate from D-glyceraldehyde 3-phosphate: step 4/5. The sequence is that of Enolase 1 (ENO1) from Debaryomyces hansenii (strain ATCC 36239 / CBS 767 / BCRC 21394 / JCM 1990 / NBRC 0083 / IGC 2968) (Yeast).